Here is a 698-residue protein sequence, read N- to C-terminus: MSIPQGLQERAAELRQLLNRAAHAYYVLDAPDLEDSVYDRLYRELLDLEAAHPELVEADSPTQRVGGSPAEGFRSVTHRIPLFSLDNAFSAEELRGWYTRLLKVLDREPPSGSPLPALAMVGELKIDGNALALSYDNGVLVRAATRGDGDQGEDITANVRTIASIPLRLHLDPPPAWVEVRGEALIPDNTFAAINSERAARDEPLFANPRNACAGTLRQLDPKVVAARRLDFFAYTLHLPEDWSGERPTSQWESLRWLEDAGFRVNPNAALLPDVDSVEQFFGDWDSRRHDLNYATDGVVVKLNDLRLQDAAGFTQKAPRWAIALKYPAEEAPSRLLKLTCQVGRTGVVTPVAEFEPVSLAGTSVSRATLHNADRLQELDLHSGDTIIVRKAGEIIPEVLRVLPELRPEGALPLELPQQCPSCGSDLVRESGEAATRCVNSSCPAILSGALRHWVSKGALDVDGLGSKLIEQLVERGLVRSIADLYRLDTALLTSLERMGEKSAGNLVAALAQSRTQPWSRQLYGLGIHHVGEVNAKALASAFADAHSLADAAVQRPEAITDLHGIGPEIAQSLQQWFNTSANQDLLQQLRAVGLTLAASDQERQALADRNNGKGHLNGQTFVLTGTLPSLSRSQAQALIEGAGGKVSGSVSKKTSFVVAGDEAGSKLDKANTLGVSVLDEAALMLLIQNSADTIHLL.

NAD(+) is bound by residues 35 to 39 (DSVYD), 84 to 85 (SL), and Glu-123. Lys-125 functions as the N6-AMP-lysine intermediate in the catalytic mechanism. Residues Arg-146, Glu-183, Lys-302, and Lys-326 each coordinate NAD(+). Residues Cys-420, Cys-423, Cys-438, and Cys-443 each contribute to the Zn(2+) site. In terms of domain architecture, BRCT spans 612-698 (NGKGHLNGQT…QNSADTIHLL (87 aa)).

It belongs to the NAD-dependent DNA ligase family. LigA subfamily. Mg(2+) is required as a cofactor. Requires Mn(2+) as cofactor.

It carries out the reaction NAD(+) + (deoxyribonucleotide)n-3'-hydroxyl + 5'-phospho-(deoxyribonucleotide)m = (deoxyribonucleotide)n+m + AMP + beta-nicotinamide D-nucleotide.. In terms of biological role, DNA ligase that catalyzes the formation of phosphodiester linkages between 5'-phosphoryl and 3'-hydroxyl groups in double-stranded DNA using NAD as a coenzyme and as the energy source for the reaction. It is essential for DNA replication and repair of damaged DNA. The sequence is that of DNA ligase from Synechococcus sp. (strain WH7803).